The following is a 704-amino-acid chain: MPRKTPIERYRNIGISAHIDAGKTTTTERILFYTGVSHKIGEVHDGAATMDWMEQEQERGITITSAATTAFWKGMAGNYPEHRINIIDTPGHVDFTIEVERSMRVLDGACMVYDSVGGVQPQSETVWRQANKYKVPRIAFVNKMDRVGADFFRVQRQIGERLKGVAVPIQIPIGAEEHFQGVVDLVKMKAIVWDDESQGVKFTYEDIPANLVEIAHEWREKMVEAAAEASEELLEKYLTDHHSLTEDEIKAALRRRTIANEIVPMLCGSAFKNKGVQAMLDAVIDYLPSPADVPAILGHDLHDNEAERHPSDDEPFSALAFKIMTDPFVGQLIFFRVYSGVVESGDTLLNATKDKKERLGRILQMHANERKEIKEVRAGDIAAAVGLKEATTGDTLCDPGKPIILEKMEFPEPVISQAVEPKTKADQEKMGLALNRLAQEDPSFRVQTDEESGQTIISGMGELHLEIIVDRMRREFGVEATVGKPQVAYRETVRTVAEDVEGKFVKQSGGRGQYGHAVIKLEPNPGKGYEFLDEIKGGVIPREFIPAVNKGIEETLKSGVLAGYPVVDVKVHLTFGSYHDVDSNENAFRMAGSMAFKEAMRRAKPVLLEPMMAVEVETPEEFMGNVMGDLSSRRGIVQGMEDIAGGGGKLVRAEVPLAEMFGYSTSLRSATQGRATYTMEFKHYAETPSNVSEAVINAKQVGRG.

Residues 8-291 (ERYRNIGISA…AVIDYLPSPA (284 aa)) enclose the tr-type G domain. Residues 17 to 24 (AHIDAGKT), 88 to 92 (DTPGH), and 142 to 145 (NKMD) each bind GTP.

This sequence belongs to the TRAFAC class translation factor GTPase superfamily. Classic translation factor GTPase family. EF-G/EF-2 subfamily.

The protein resides in the cytoplasm. Catalyzes the GTP-dependent ribosomal translocation step during translation elongation. During this step, the ribosome changes from the pre-translocational (PRE) to the post-translocational (POST) state as the newly formed A-site-bound peptidyl-tRNA and P-site-bound deacylated tRNA move to the P and E sites, respectively. Catalyzes the coordinated movement of the two tRNA molecules, the mRNA and conformational changes in the ribosome. This is Elongation factor G 1 from Burkholderia thailandensis (strain ATCC 700388 / DSM 13276 / CCUG 48851 / CIP 106301 / E264).